The sequence spans 31 residues: MLTITSYFGFLLVVLTITSALFIGLSKIRLI.

The chain crosses the membrane as a helical span at residues 4–24; sequence ITSYFGFLLVVLTITSALFIG.

This sequence belongs to the PetL family. As to quaternary structure, the 4 large subunits of the cytochrome b6-f complex are cytochrome b6, subunit IV (17 kDa polypeptide, PetD), cytochrome f and the Rieske protein, while the 4 small subunits are PetG, PetL, PetM and PetN. The complex functions as a dimer.

It localises to the plastid. The protein localises to the chloroplast thylakoid membrane. In terms of biological role, component of the cytochrome b6-f complex, which mediates electron transfer between photosystem II (PSII) and photosystem I (PSI), cyclic electron flow around PSI, and state transitions. PetL is important for photoautotrophic growth as well as for electron transfer efficiency and stability of the cytochrome b6-f complex. This chain is Cytochrome b6-f complex subunit 6, found in Jasminum nudiflorum (Winter jasmine).